The primary structure comprises 151 residues: Deoxyuridine 5'-triphosphate nucleotidohydrolase (151 aa).

Substrate contacts are provided by residues 70-72 (RSG), N83, 87-89 (LID), and M97.

It belongs to the dUTPase family. It depends on Mg(2+) as a cofactor.

The catalysed reaction is dUTP + H2O = dUMP + diphosphate + H(+). It participates in pyrimidine metabolism; dUMP biosynthesis; dUMP from dCTP (dUTP route): step 2/2. Its function is as follows. This enzyme is involved in nucleotide metabolism: it produces dUMP, the immediate precursor of thymidine nucleotides and it decreases the intracellular concentration of dUTP so that uracil cannot be incorporated into DNA. The chain is Deoxyuridine 5'-triphosphate nucleotidohydrolase from Pseudomonas entomophila (strain L48).